We begin with the raw amino-acid sequence, 505 residues long: Ion-translocating oxidoreductase complex subunit C (505 aa).

2 consecutive 4Fe-4S ferredoxin-type domains span residues 381-410 (ELNNFEEKNCIRCAACSYSCPMNLLPEQLY) and 420-449 (KTQIYNIQDCIECGICEQVCPSDIPLMSYY). [4Fe-4S] cluster-binding residues include Cys390, Cys393, Cys396, Cys400, Cys429, Cys432, Cys435, and Cys439.

It belongs to the 4Fe4S bacterial-type ferredoxin family. RnfC subfamily. In terms of assembly, the complex is composed of six subunits: RnfA, RnfB, RnfC, RnfD, RnfE and RnfG. [4Fe-4S] cluster serves as cofactor.

It localises to the cell inner membrane. Its function is as follows. Part of a membrane-bound complex that couples electron transfer with translocation of ions across the membrane. This is Ion-translocating oxidoreductase complex subunit C from Buchnera aphidicola subsp. Baizongia pistaciae (strain Bp).